The primary structure comprises 894 residues: Mitogen-activated protein kinase kinase kinase kinase 3 (894 aa).

Met1 is subject to N-acetylmethionine. Residues 16–273 (FELIQRIGSG…AEKLLQHPFV (258 aa)) form the Protein kinase domain. ATP-binding positions include 22–30 (IGSGTYGDV), Lys45, and Lys48. Asp136 (proton acceptor) is an active-site residue. Phosphoserine is present on residues Ser329 and Ser398. The interval 410-536 (AHLEDDEGDD…DVPKPISNGL (127 aa)) is disordered. Over residues 473 to 487 (QVPPRPPPPRLPPHK) the composition is skewed to pro residues. Over residues 513–529 (NEHRGTNLSRKEKKDVP) the composition is skewed to basic and acidic residues. Residues 556–867 (PLKIHCASSW…IFRLLGSDRV (312 aa)) form the CNH domain.

It belongs to the protein kinase superfamily. STE Ser/Thr protein kinase family. STE20 subfamily. In terms of assembly, interacts with SH3GL2. Interaction appears to regulate MAP4K3-mediated JNK activation. The cofactor is Mg(2+). In terms of tissue distribution, ubiquitously expressed in all tissues examined, with high levels in heart, brain, placenta, skeletal muscle, kidney and pancreas and lower levels in lung and liver.

It carries out the reaction L-seryl-[protein] + ATP = O-phospho-L-seryl-[protein] + ADP + H(+). The catalysed reaction is L-threonyl-[protein] + ATP = O-phospho-L-threonyl-[protein] + ADP + H(+). Its function is as follows. Serine/threonine kinase that plays a role in the response to environmental stress. Appears to act upstream of the JUN N-terminal pathway. Activator of the Hippo signaling pathway which plays a pivotal role in organ size control and tumor suppression by restricting proliferation and promoting apoptosis. MAP4Ks act in parallel to and are partially redundant with STK3/MST2 and STK4/MST2 in the phosphorylation and activation of LATS1/2, and establish MAP4Ks as components of the expanded Hippo pathway. The sequence is that of Mitogen-activated protein kinase kinase kinase kinase 3 from Homo sapiens (Human).